A 902-amino-acid polypeptide reads, in one-letter code: Cytosolic 10-formyltetrahydrofolate dehydrogenase (902 aa).

The segment at 1–310 (MKIAVIGQSL…PASQFFKGSA (310 aa)) is hydrolase domain. At Ser-9 the chain carries Phosphoserine. Lys-38 carries the N6-succinyllysine modification. Residue 88 to 90 (QFI) coordinates (6R)-10-formyltetrahydrofolate. Catalysis depends on His-106, which acts as the Proton donor. Asp-142 serves as a coordination point for (6R)-10-formyltetrahydrofolate. The 78-residue stretch at 318–395 (EEELATAEAV…DFIQLLVRKL (78 aa)) folds into the Carrier domain. Position 354 is an O-(pantetheine 4'-phosphoryl)serine (Ser-354). Residues 417–902 (TLQMPYQLFI…LRIKTVTFEY (486 aa)) are aldehyde dehydrogenase domain. Residues 571–573 (IPW) and 597–600 (KPAQ) each bind NADP(+). A phosphoserine mark is found at Ser-629 and Ser-631. NADP(+) contacts are provided by residues 630 to 635 (GSLVGQ) and 650 to 651 (GS). Lys-660 carries the N6-succinyllysine modification. Catalysis depends on Glu-673, which acts as the Proton acceptor. 673-674 (EL) is an NADP(+) binding site. Cys-707 serves as the catalytic Proton donor. Residue Lys-757 coordinates NADP(+). Lys-767 carries the post-translational modification N6-succinyllysine. 804-806 (ESF) is a binding site for NADP(+). Ser-825 carries the phosphoserine modification. At Lys-882 the chain carries N6-acetyllysine.

In the N-terminal section; belongs to the GART family. This sequence in the C-terminal section; belongs to the aldehyde dehydrogenase family. ALDH1L subfamily. As to quaternary structure, homotetramer. Phosphopantetheinylation at Ser-354 by AASDHPPT is required for the formyltetrahydrofolate dehydrogenase activity. In terms of tissue distribution, highly expressed in liver (at protein level). Also expressed in pancreas, brain and lung (at protein level).

The protein resides in the cytoplasm. It is found in the cytosol. It catalyses the reaction (6R)-10-formyltetrahydrofolate + NADP(+) + H2O = (6S)-5,6,7,8-tetrahydrofolate + CO2 + NADPH + H(+). Its function is as follows. Cytosolic 10-formyltetrahydrofolate dehydrogenase that catalyzes the NADP(+)-dependent conversion of 10-formyltetrahydrofolate to tetrahydrofolate and carbon dioxide. May also have an NADP(+)-dependent aldehyde dehydrogenase activity towards formaldehyde, acetaldehyde, propionaldehyde, and benzaldehyde. This chain is Cytosolic 10-formyltetrahydrofolate dehydrogenase, found in Mus musculus (Mouse).